We begin with the raw amino-acid sequence, 602 residues long: Transcription termination factor Rho (602 aa).

Disordered stretches follow at residues 1-35 and 76-216; these read MTDT…EPAG and ANGA…AEAE. A compositionally biased stretch (basic and acidic residues) spans 85–96; it reads SAQEHDKGDRPP. Residues 100 to 120 are compositionally biased toward polar residues; the sequence is APATQGEQTPTEQIDSQSQQV. The segment covering 172–182 has biased composition (low complexity); that stretch reads GDQQASGGQQA. Residues 183-192 show a composition bias toward basic and acidic residues; sequence RGDEDGEARQ. A compositionally biased stretch (basic residues) spans 193–206; the sequence is GRRGRRFRDRRRRG. The Rho RNA-BD domain occupies 223–301; the sequence is VQPVAGILDV…VRLDSINGGS (79 aa). Residues 344-349, 356-361, and arginine 387 each bind ATP; these read GKGQRA and KAGKTT.

Belongs to the Rho family. As to quaternary structure, homohexamer. The homohexamer assembles into an open ring structure.

Its function is as follows. Facilitates transcription termination by a mechanism that involves Rho binding to the nascent RNA, activation of Rho's RNA-dependent ATPase activity, and release of the mRNA from the DNA template. The protein is Transcription termination factor Rho of Mycobacterium bovis (strain ATCC BAA-935 / AF2122/97).